The chain runs to 706 residues: Elongation factor G (706 aa).

A tr-type G domain is found at 12–288; the sequence is EKTRNIGIMA…GVTNYLPSPN (277 aa). Residues 21–28, 85–89, and 139–142 each bind GTP; these read AHIDAGKT, DTPGH, and NKMD. Residues 288–309 form a disordered region; it reads NDVPAITGHHPQDKEEDITRHP. Over residues 297–309 the composition is skewed to basic and acidic residues; the sequence is HPQDKEEDITRHP.

Belongs to the TRAFAC class translation factor GTPase superfamily. Classic translation factor GTPase family. EF-G/EF-2 subfamily.

The protein localises to the cytoplasm. Functionally, catalyzes the GTP-dependent ribosomal translocation step during translation elongation. During this step, the ribosome changes from the pre-translocational (PRE) to the post-translocational (POST) state as the newly formed A-site-bound peptidyl-tRNA and P-site-bound deacylated tRNA move to the P and E sites, respectively. Catalyzes the coordinated movement of the two tRNA molecules, the mRNA and conformational changes in the ribosome. The chain is Elongation factor G from Salinibacter ruber (strain DSM 13855 / M31).